Here is a 580-residue protein sequence, read N- to C-terminus: Probable inositol transporter 3 (580 aa).

Transmembrane regions (helical) follow at residues 34 to 54 (GIGG…LLYI), 69 to 89 (EIIV…GGWY), 104 to 124 (VLFL…VIIL), 127 to 147 (LLVG…ISEM), 161 to 181 (GLLI…FVHT), 187 to 207 (WMLG…LTLP), 289 to 309 (FVGI…AGYA), 316 to 336 (ALAL…MMFV), 344 to 364 (LMII…AVFN), 455 to 475 (FGYL…PGMG), 493 to 513 (LAGG…SETF), and 524 to 544 (GTFL…WLLV).

The protein belongs to the major facilitator superfamily. Sugar transporter (TC 2.A.1.1) family.

It localises to the membrane. Plasma membrane inositol-proton symporter. This chain is Probable inositol transporter 3 (INT3), found in Arabidopsis thaliana (Mouse-ear cress).